A 172-amino-acid polypeptide reads, in one-letter code: Peroxiredoxin AHP1 (172 aa).

One can recognise a Thioredoxin domain in the interval 4 to 171 (LQPGDSFPAN…VLTVLGNQGK (168 aa)). A Glycyl lysine isopeptide (Lys-Gly) (interchain with G-Cter in URM1) cross-link involves residue Lys44. Catalysis depends on Cys60, which acts as the Cysteine sulfenic acid (-SOH) intermediate. Cys60 is modified (cysteine persulfide). Residues Lys63, Lys99, Lys141, Lys156, and Lys171 each participate in a glycyl lysine isopeptide (Lys-Gly) (interchain with G-Cter in URM1) cross-link.

The protein belongs to the peroxiredoxin family. Prx5 subfamily. As to quaternary structure, homodimer; disulfide-linked, upon oxidation. Conjugated to URM1, a ubiquitin-like protein, in response to oxidative stresses. The attachment of URM1 to lysine residues exclusively depends on the presence of a peroxidatic cysteine in the target protein, with low specificity for the particular residue, motif, or structural context at which urmylation can occur. The URM1-conjugation reaction is mechanistically and directly coupled to the process of cysteine persulfidation, transfering the sulfur atom of the URM1 thiocarboxyl group to redox-active cysteine residues in the target protein if it is exposed to oxidative conditions. In terms of processing, persulfidated on specific redox-active cysteine residues. Persulfidation (also called protein S-sulfhydration) may provide a molecular mechanism that enables cells to protect vulnerable cysteine residues from reactive oxygen species (ROS) under stress conditions.

Its subcellular location is the cytoplasm. The enzyme catalyses a hydroperoxide + [thioredoxin]-dithiol = an alcohol + [thioredoxin]-disulfide + H2O. In terms of biological role, thiol-specific peroxidase that catalyzes the reduction of hydrogen peroxide and organic hydroperoxides to water and alcohols, respectively. Plays a role in cell protection against oxidative stress by detoxifying peroxides and as sensor of hydrogen peroxide-mediated signaling events. Preferentially eliminates organic peroxides rather than hydrogen peroxide. Relays alkyl hydroperoxides as a signal to the transcription factor CAD1/YAP2 by inducing the formation of intramolecular disulfide bonds in CAD1, which causes its nuclear accumulation and activation. Involved in cellular Mn(2+) homeostasis. The protein is Peroxiredoxin AHP1 (AHP1) of Chaetomium thermophilum (strain DSM 1495 / CBS 144.50 / IMI 039719) (Thermochaetoides thermophila).